We begin with the raw amino-acid sequence, 161 residues long: Allophycocyanin alpha-B chain (161 aa).

The residue at position 71 (asparagine 71) is an N4-methylasparagine. Position 81 (cysteine 81) interacts with (2R,3E)-phycocyanobilin.

It belongs to the phycobiliprotein family. Contains one covalently linked bilin chromophore.

The protein resides in the plastid. It localises to the chloroplast thylakoid membrane. In terms of biological role, allophycocyanin is a photosynthetic bile pigment-protein complex with maximum absorption at approximately 650 nanometers. The chain is Allophycocyanin alpha-B chain (apcD) from Pyropia yezoensis (Susabi-nori).